A 336-amino-acid chain; its full sequence is F420-dependent glucose-6-phosphate dehydrogenase (336 aa).

D39 contacts coenzyme F420-(gamma-Glu)n. The active-site Proton donor is H40. Coenzyme F420-(gamma-Glu)n-binding positions include T76 and 107–108; that span reads TG. E109 serves as the catalytic Proton acceptor. Residues N112, 177–178, and 180–181 contribute to the coenzyme F420-(gamma-Glu)n site; these read GG and LV. Residues T195, K198, K259, and R283 each contribute to the substrate site.

Belongs to the F420-dependent glucose-6-phosphate dehydrogenase family. In terms of assembly, homodimer.

It catalyses the reaction oxidized coenzyme F420-(gamma-L-Glu)(n) + D-glucose 6-phosphate + H(+) = 6-phospho-D-glucono-1,5-lactone + reduced coenzyme F420-(gamma-L-Glu)(n). In terms of biological role, catalyzes the coenzyme F420-dependent oxidation of glucose 6-phosphate (G6P) to 6-phosphogluconolactone. The polypeptide is F420-dependent glucose-6-phosphate dehydrogenase (Nocardia farcinica (strain IFM 10152)).